We begin with the raw amino-acid sequence, 334 residues long: Endochitinase 3 (334 aa).

Positions 1 to 23 are cleaved as a signal peptide; sequence MRLLEFTALSSLLVLFLLLAVSA. A Chitin-binding type-1 domain is found at 24–65; the sequence is EQCGKQAGGARCPSGMCCSNFGWCGNTQDYCGPGKCQSQCPS. 4 disulfides stabilise this stretch: Cys26/Cys41, Cys35/Cys47, Cys40/Cys54, and Cys59/Cys63. The tract at residues 64–84 is disordered; the sequence is PSGPGPTPRPPTPTPGPSTGD. The segment covering 66-79 has biased composition (pro residues); that stretch reads GPGPTPRPPTPTPG. 4-hydroxyproline occurs at positions 73, 74, and 76. 3 cysteine pairs are disulfide-bonded: Cys106–Cys168, Cys180–Cys188, and Cys287–Cys319. The active-site Proton donor is Glu150. Residues 328–334 constitute a propeptide, removed in mature form; that stretch reads GLLLETM.

This sequence belongs to the glycosyl hydrolase 19 family. Chitinase class I subfamily. In terms of processing, the 4-hydroxyproline residues are not glycosylated in this plant vacuolar protein.

The protein resides in the vacuole. It carries out the reaction Random endo-hydrolysis of N-acetyl-beta-D-glucosaminide (1-&gt;4)-beta-linkages in chitin and chitodextrins.. Defense against chitin-containing fungal pathogens. This chain is Endochitinase 3 (CHN14), found in Nicotiana tabacum (Common tobacco).